A 644-amino-acid chain; its full sequence is uncharacterized protein (644 aa).

254-261 (GKMGAGKS) provides a ligand contact to ATP.

This is an uncharacterized protein from Bacillus anthracis.